A 268-amino-acid chain; its full sequence is Undecaprenyl-diphosphatase (268 aa).

The next 7 helical transmembrane spans lie at 47–67 (FTIL…FAKL), 83–103 (FVIG…LAGG), 109–129 (LFNP…LLWV), 144–164 (FPLP…IPGV), 184–204 (AAEF…VYDL), 217–237 (LIVA…VKSF), and 246–266 (FTLF…ALAL).

The protein belongs to the UppP family.

Its subcellular location is the cell inner membrane. The enzyme catalyses di-trans,octa-cis-undecaprenyl diphosphate + H2O = di-trans,octa-cis-undecaprenyl phosphate + phosphate + H(+). Its function is as follows. Catalyzes the dephosphorylation of undecaprenyl diphosphate (UPP). Confers resistance to bacitracin. This Rhodopseudomonas palustris (strain BisB18) protein is Undecaprenyl-diphosphatase.